Here is a 210-residue protein sequence, read N- to C-terminus: Orotate phosphoribosyltransferase (210 aa).

Residues Arg97, Lys98, and Asn125–Ser133 each bind 5-phospho-alpha-D-ribose 1-diphosphate. Residues Ser129 and Arg157 each contribute to the orotate site.

The protein belongs to the purine/pyrimidine phosphoribosyltransferase family. PyrE subfamily. In terms of assembly, homodimer. Mg(2+) is required as a cofactor.

The enzyme catalyses orotidine 5'-phosphate + diphosphate = orotate + 5-phospho-alpha-D-ribose 1-diphosphate. It functions in the pathway pyrimidine metabolism; UMP biosynthesis via de novo pathway; UMP from orotate: step 1/2. In terms of biological role, catalyzes the transfer of a ribosyl phosphate group from 5-phosphoribose 1-diphosphate to orotate, leading to the formation of orotidine monophosphate (OMP). This is Orotate phosphoribosyltransferase from Chlamydia pneumoniae (Chlamydophila pneumoniae).